A 256-amino-acid polypeptide reads, in one-letter code: Probable serine/threonine-protein kinase YbdM (256 aa).

Residues 25 to 256 enclose the Protein kinase domain; that stretch reads YKIEECLGMG…DLNRAIQSVT (232 aa). ATP-binding positions include 31–39 and lysine 54; that span reads LGMGGYGLV. Aspartate 149 serves as the catalytic Proton acceptor.

The protein belongs to the protein kinase superfamily. Ser/Thr protein kinase family.

It carries out the reaction L-seryl-[protein] + ATP = O-phospho-L-seryl-[protein] + ADP + H(+). It catalyses the reaction L-threonyl-[protein] + ATP = O-phospho-L-threonyl-[protein] + ADP + H(+). This is Probable serine/threonine-protein kinase YbdM (ybdM) from Bacillus subtilis (strain 168).